Reading from the N-terminus, the 200-residue chain is Small ribosomal subunit protein uS4 (200 aa).

Positions 22-43 (TGKELERRPYAPGQHGPTQRKK) are disordered. Residues 92–170 (QRLDNIVYRL…VPEYVTFDAE (79 aa)) enclose the S4 RNA-binding domain.

Belongs to the universal ribosomal protein uS4 family. In terms of assembly, part of the 30S ribosomal subunit. Contacts protein S5. The interaction surface between S4 and S5 is involved in control of translational fidelity.

In terms of biological role, one of the primary rRNA binding proteins, it binds directly to 16S rRNA where it nucleates assembly of the body of the 30S subunit. Its function is as follows. With S5 and S12 plays an important role in translational accuracy. This chain is Small ribosomal subunit protein uS4, found in Listeria innocua serovar 6a (strain ATCC BAA-680 / CLIP 11262).